The chain runs to 89 residues: Small ribosomal subunit protein uS15 (89 aa).

This sequence belongs to the universal ribosomal protein uS15 family. Part of the 30S ribosomal subunit. Forms a bridge to the 50S subunit in the 70S ribosome, contacting the 23S rRNA.

One of the primary rRNA binding proteins, it binds directly to 16S rRNA where it helps nucleate assembly of the platform of the 30S subunit by binding and bridging several RNA helices of the 16S rRNA. Functionally, forms an intersubunit bridge (bridge B4) with the 23S rRNA of the 50S subunit in the ribosome. The sequence is that of Small ribosomal subunit protein uS15 from Bdellovibrio bacteriovorus (strain ATCC 15356 / DSM 50701 / NCIMB 9529 / HD100).